We begin with the raw amino-acid sequence, 212 residues long: External core antigen (212 aa).

The first 19 residues, 1 to 19, serve as a signal peptide directing secretion; it reads MQLFHLCLIISCSCPTVQA. Residues 25–27 are HBEAG; that stretch reads GWL. Residues 165-212 form a disordered region; sequence NAPILSTLPETTVVRRRGRSPRRRTPSPRRRRSQSPRRRRSQSRESQC. Positions 178–205 are enriched in basic residues; it reads VRRRGRSPRRRTPSPRRRRSQSPRRRRS. Residues 184 to 190 form a 1; half-length repeat; it reads SPRRRTP. The interval 184–206 is 3 X 8 AA repeats of S-P-R-R-R-R-S-Q; sequence SPRRRTPSPRRRRSQSPRRRRSQ. A propeptide spanning residues 184–212 is cleaved from the precursor; sequence SPRRRTPSPRRRRSQSPRRRRSQSRESQC. A run of 2 repeats spans residues 191–198 and 199–206.

The protein belongs to the orthohepadnavirus precore antigen family. Homodimerizes. Post-translationally, phosphorylated. Cleaved by host furin.

It localises to the secreted. It is found in the host nucleus. Functionally, may regulate immune response to the intracellular capsid in acting as a T-cell tolerogen, by having an immunoregulatory effect which prevents destruction of infected cells by cytotoxic T-cells. This immune regulation may predispose to chronicity during perinatal infections and prevent severe liver injury during adult infections. The polypeptide is External core antigen (Hepatitis B virus genotype B2 (isolate Indonesia/pIDW420/1988) (HBV-B)).